The sequence spans 65 residues: Muscarinic toxin-like protein 2 (65 aa).

4 disulfide bridges follow: cysteine 3–cysteine 24, cysteine 17–cysteine 42, cysteine 46–cysteine 57, and cysteine 58–cysteine 63.

It belongs to the three-finger toxin family. Short-chain subfamily. Type C muscarinic toxin sub-subfamily. As to quaternary structure, monomer. Expressed by the venom gland.

It is found in the secreted. This is Muscarinic toxin-like protein 2 from Naja kaouthia (Monocled cobra).